The following is a 285-amino-acid chain: Pantothenate synthetase (285 aa).

Residue 30-37 coordinates ATP; sequence MGNLHAGH. Histidine 37 functions as the Proton donor in the catalytic mechanism. Glutamine 61 serves as a coordination point for (R)-pantoate. Glutamine 61 serves as a coordination point for beta-alanine. Residue 149-152 coordinates ATP; it reads GEKD. Glutamine 155 lines the (R)-pantoate pocket. ATP is bound at residue 186-189; that stretch reads LSSR.

Belongs to the pantothenate synthetase family. In terms of assembly, homodimer.

It is found in the cytoplasm. The enzyme catalyses (R)-pantoate + beta-alanine + ATP = (R)-pantothenate + AMP + diphosphate + H(+). It participates in cofactor biosynthesis; (R)-pantothenate biosynthesis; (R)-pantothenate from (R)-pantoate and beta-alanine: step 1/1. In terms of biological role, catalyzes the condensation of pantoate with beta-alanine in an ATP-dependent reaction via a pantoyl-adenylate intermediate. The sequence is that of Pantothenate synthetase from Ectopseudomonas mendocina (strain ymp) (Pseudomonas mendocina).